Here is an 808-residue protein sequence, read N- to C-terminus: Receptor like protein 27 (808 aa).

An N-terminal signal peptide occupies residues 1-31 (MLFFIKVFMKTILSVLLLFFIFASSFTLVVG). The Extracellular portion of the chain corresponds to 32-740 (LAGCRPDQIQ…DEDEEVLNWK (709 aa)). 7 N-linked (GlcNAc...) asparagine glycosylation sites follow: Asn56, Asn68, Asn90, Asn103, Asn108, Asn144, and Asn167. 12 LRR repeats span residues 96–120 (LQHLRYLNLSNNNFTSASLPSGFGN), 122–144 (NRLEVLYLSSNGFLGQVPSSFSN), 145–170 (LSQLNILDLSHNELTGSFPFVQNLTK), 172–192 (SILVLSYNHFSGTIPSSLLTL), 193–218 (PFLSSLDLRENYLTGSIEAPNSSTSS), 220–241 (LEFMYLGNNHFEGQILEPISKL), 242–265 (INLKHLDLSFLKTSYPIDLNLFSS), 266–291 (FKSLVRLVLSGNSLLATSITSDSKIP), 293–314 (NLENLVLLSCGLIEFPTILKNL), 315–338 (TKLEHIDLSNNKIKGKVPEWFWNL), 340–363 (RLRRVNLFNNLFTDLEGSEEVLVN), and 364–387 (SSVRLLDLAYNHFRGPFPKPPLSI). N-linked (GlcNAc...) asparagine glycosylation is present at Asn213. N-linked (GlcNAc...) asparagine glycosylation occurs at Asn313. A glycan (N-linked (GlcNAc...) asparagine) is linked at Asn363. The LRR 13; degenerate repeat unit spans residues 388–407 (NLLSAWNNSFTGNIPLETCN). N-linked (GlcNAc...) asparagine glycosylation is found at Asn394, Asn407, and Asn420. LRR repeat units follow at residues 408-434 (RSSLAILDLSYNNLTGPIPRCLSDFQE), 436-456 (LIVVNLRKNNLEGSLPDIFSD), 457-481 (GALLRTLDVGYNQLTGKLPRSLLNC), 483-504 (MLRFVSVDHNKIKDTFPFWLKA), 505-529 (LPDLQALTLRSNKFHGPISPPDRGP), 532-556 (FPKLRILEISDNNFTGSLPPNYFVN), 601-625 (LTSYATIDFSGNKLEGQIPESIGLL), 626-649 (KALIALNLSNNAFTGHIPLSLANV), 650-673 (TELESLDLSRNQLSGTIPNGLKTL), and 675-698 (FLAYISVAHNQLIGEIPQGTQITG). An N-linked (GlcNAc...) asparagine glycan is attached at Asn480. Asn544 carries an N-linked (GlcNAc...) asparagine glycan. Asn632 and Asn648 each carry an N-linked (GlcNAc...) asparagine glycan. The helical transmembrane segment at 741 to 761 (AVVIGYWPGLLLGLIMAHVIA) threads the bilayer. Residues 762–808 (SFKPKWLVKIVGPEKRKEDNPVRLFMTLDSRWDSFNNKKNVEQKSDM) are Cytoplasmic-facing.

The protein belongs to the RLP family.

It is found in the cell membrane. The protein is Receptor like protein 27 of Arabidopsis thaliana (Mouse-ear cress).